The chain runs to 163 residues: ATP synthase subunit b 1 (163 aa).

The helical transmembrane segment at F5–L25 threads the bilayer.

Belongs to the ATPase B chain family. F-type ATPases have 2 components, F(1) - the catalytic core - and F(0) - the membrane proton channel. F(1) has five subunits: alpha(3), beta(3), gamma(1), delta(1), epsilon(1). F(0) has three main subunits: a(1), b(2) and c(10-14). The alpha and beta chains form an alternating ring which encloses part of the gamma chain. F(1) is attached to F(0) by a central stalk formed by the gamma and epsilon chains, while a peripheral stalk is formed by the delta and b chains.

It localises to the cell inner membrane. Its function is as follows. F(1)F(0) ATP synthase produces ATP from ADP in the presence of a proton or sodium gradient. F-type ATPases consist of two structural domains, F(1) containing the extramembraneous catalytic core and F(0) containing the membrane proton channel, linked together by a central stalk and a peripheral stalk. During catalysis, ATP synthesis in the catalytic domain of F(1) is coupled via a rotary mechanism of the central stalk subunits to proton translocation. In terms of biological role, component of the F(0) channel, it forms part of the peripheral stalk, linking F(1) to F(0). This Rhizobium leguminosarum bv. trifolii (strain WSM2304) protein is ATP synthase subunit b 1.